Here is a 537-residue protein sequence, read N- to C-terminus: Phosphoenolpyruvate carboxykinase (ATP) (537 aa).

Substrate-binding residues include Arg64, Tyr204, and Lys210. ATP-binding positions include Lys210, His229, and 245-253 (GLSGTGKTT). 2 residues coordinate Mn(2+): Lys210 and His229. Mn(2+) is bound at residue Asp266. ATP is bound by residues Glu294, Arg330, 446 to 447 (RI), and Thr452. Arg330 lines the substrate pocket.

Belongs to the phosphoenolpyruvate carboxykinase (ATP) family. In terms of assembly, monomer. The cofactor is Mn(2+).

Its subcellular location is the cytoplasm. The catalysed reaction is oxaloacetate + ATP = phosphoenolpyruvate + ADP + CO2. Its pathway is carbohydrate biosynthesis; gluconeogenesis. Its function is as follows. Involved in the gluconeogenesis. Catalyzes the conversion of oxaloacetate (OAA) to phosphoenolpyruvate (PEP) through direct phosphoryl transfer between the nucleoside triphosphate and OAA. This chain is Phosphoenolpyruvate carboxykinase (ATP), found in Aliivibrio fischeri (strain ATCC 700601 / ES114) (Vibrio fischeri).